The primary structure comprises 457 residues: Siroheme synthase (457 aa).

Positions 1 to 204 (MDHLPIFCQL…NDQKAITETT (204 aa)) are precorrin-2 dehydrogenase /sirohydrochlorin ferrochelatase. NAD(+)-binding positions include 22-23 (DV) and 43-44 (LA). Serine 128 carries the phosphoserine modification. A uroporphyrinogen-III C-methyltransferase region spans residues 216-457 (GEVVLVGAGP…RDKLNWFSNH (242 aa)). Position 225 (proline 225) interacts with S-adenosyl-L-methionine. Aspartate 248 serves as the catalytic Proton acceptor. Lysine 270 acts as the Proton donor in catalysis. S-adenosyl-L-methionine contacts are provided by residues 301–303 (GGD), isoleucine 306, 331–332 (TA), methionine 382, and glycine 411.

It in the N-terminal section; belongs to the precorrin-2 dehydrogenase / sirohydrochlorin ferrochelatase family. In the C-terminal section; belongs to the precorrin methyltransferase family.

It carries out the reaction uroporphyrinogen III + 2 S-adenosyl-L-methionine = precorrin-2 + 2 S-adenosyl-L-homocysteine + H(+). It catalyses the reaction precorrin-2 + NAD(+) = sirohydrochlorin + NADH + 2 H(+). The enzyme catalyses siroheme + 2 H(+) = sirohydrochlorin + Fe(2+). It participates in cofactor biosynthesis; adenosylcobalamin biosynthesis; precorrin-2 from uroporphyrinogen III: step 1/1. It functions in the pathway cofactor biosynthesis; adenosylcobalamin biosynthesis; sirohydrochlorin from precorrin-2: step 1/1. The protein operates within porphyrin-containing compound metabolism; siroheme biosynthesis; precorrin-2 from uroporphyrinogen III: step 1/1. Its pathway is porphyrin-containing compound metabolism; siroheme biosynthesis; siroheme from sirohydrochlorin: step 1/1. It participates in porphyrin-containing compound metabolism; siroheme biosynthesis; sirohydrochlorin from precorrin-2: step 1/1. Its function is as follows. Multifunctional enzyme that catalyzes the SAM-dependent methylations of uroporphyrinogen III at position C-2 and C-7 to form precorrin-2 via precorrin-1. Then it catalyzes the NAD-dependent ring dehydrogenation of precorrin-2 to yield sirohydrochlorin. Finally, it catalyzes the ferrochelation of sirohydrochlorin to yield siroheme. The protein is Siroheme synthase of Shigella dysenteriae serotype 1 (strain Sd197).